Here is a 335-residue protein sequence, read N- to C-terminus: Large ribosomal subunit protein uL3 (335 aa).

The disordered stretch occupies residues 1 to 20 (MATIHRPRRGSLAFSPRKRA).

This sequence belongs to the universal ribosomal protein uL3 family. In terms of assembly, part of the 50S ribosomal subunit. Forms a cluster with proteins L14 and L24e.

Functionally, one of the primary rRNA binding proteins, it binds directly near the 3'-end of the 23S rRNA, where it nucleates assembly of the 50S subunit. The sequence is that of Large ribosomal subunit protein uL3 from Methanothrix thermoacetophila (strain DSM 6194 / JCM 14653 / NBRC 101360 / PT) (Methanosaeta thermophila).